Reading from the N-terminus, the 56-residue chain is UPF0434 protein Sden_2197 (56 aa).

This sequence belongs to the UPF0434 family.

This chain is UPF0434 protein Sden_2197, found in Shewanella denitrificans (strain OS217 / ATCC BAA-1090 / DSM 15013).